Reading from the N-terminus, the 346-residue chain is Aldose 1-epimerase (346 aa).

Position 79 (Arg-79) interacts with substrate. His-175 functions as the Proton donor in the catalytic mechanism. Asp-245 contacts substrate. Glu-309 acts as the Proton acceptor in catalysis.

It belongs to the aldose epimerase family.

It is found in the cytoplasm. It catalyses the reaction alpha-D-glucose = beta-D-glucose. It participates in carbohydrate metabolism; hexose metabolism. Functionally, mutarotase converts alpha-aldose to the beta-anomer. It is active on D-glucose, L-arabinose, D-xylose, D-galactose, maltose and lactose. This is Aldose 1-epimerase (galM) from Escherichia coli (strain K12).